Here is a 182-residue protein sequence, read N- to C-terminus: UPF0316 protein BCB4264_A3368 (182 aa).

Transmembrane regions (helical) follow at residues 6–26 (LIFV…ILLV), 32–52 (SAAG…GIVF), and 58–78 (WMNI…GGYI).

Belongs to the UPF0316 family.

The protein resides in the cell membrane. This Bacillus cereus (strain B4264) protein is UPF0316 protein BCB4264_A3368.